The primary structure comprises 310 residues: tRNA-splicing endonuclease subunit Sen34 (310 aa).

Positions 119 to 177 are disordered; it reads GQAAKKQKLEQASGASSSQEAGSSQAAKEDETSDGQASGEQEEAGPSSSQAGPSNGVAP. Residues 128–144 are compositionally biased toward low complexity; that stretch reads EQASGASSSQEAGSSQA. Catalysis depends on residues Tyr247, His255, and Lys286.

The protein belongs to the tRNA-intron endonuclease family. In terms of assembly, tRNA splicing endonuclease is a heterotetramer composed of TSEN2, TSEN15, TSEN34/LENG5 and TSEN54. tRNA splicing endonuclease complex also contains proteins of the pre-mRNA 3'-end processing machinery such as CLP1, CPSF1, CPSF4 and CSTF2.

It localises to the nucleus. It is found in the nucleolus. The catalysed reaction is pretRNA = a 3'-half-tRNA molecule with a 5'-OH end + a 5'-half-tRNA molecule with a 2',3'-cyclic phosphate end + an intron with a 2',3'-cyclic phosphate and a 5'-hydroxyl terminus.. Its function is as follows. Constitutes one of the two catalytic subunit of the tRNA-splicing endonuclease complex, a complex responsible for identification and cleavage of the splice sites in pre-tRNA. It cleaves pre-tRNA at the 5'- and 3'-splice sites to release the intron. The products are an intron and two tRNA half-molecules bearing 2',3'-cyclic phosphate and 5'-OH termini. There are no conserved sequences at the splice sites, but the intron is invariably located at the same site in the gene, placing the splice sites an invariant distance from the constant structural features of the tRNA body. It probably carries the active site for 3'-splice site cleavage. The tRNA splicing endonuclease is also involved in mRNA processing via its association with pre-mRNA 3'-end processing factors, establishing a link between pre-tRNA splicing and pre-mRNA 3'-end formation, suggesting that the endonuclease subunits function in multiple RNA-processing events. In Homo sapiens (Human), this protein is tRNA-splicing endonuclease subunit Sen34 (TSEN34).